A 118-amino-acid polypeptide reads, in one-letter code: IgW heavy chain V region W26 (118 aa).

One can recognise an Ig-like domain in the interval 1–109 (NIVLTQPESA…PQWGYWGSGT (109 aa)). The cysteines at positions 22 and 93 are disulfide-linked.

In terms of tissue distribution, expressed mainly in lymphoid tissues including spleen, epigonal organ and circulating lymphocytes.

The sequence is that of IgW heavy chain V region W26 from Heterodontus francisci (Horn shark).